The following is a 437-amino-acid chain: Aspartate aminotransferase, mitochondrial (437 aa).

Gly72, Trp167, and Asn220 together coordinate L-aspartate. Residue Lys284 is modified to N6-(pyridoxal phosphate)lysine. Arg413 lines the L-aspartate pocket.

This sequence belongs to the class-I pyridoxal-phosphate-dependent aminotransferase family. As to quaternary structure, homodimer. It depends on pyridoxal 5'-phosphate as a cofactor.

Its subcellular location is the mitochondrion matrix. It carries out the reaction L-aspartate + 2-oxoglutarate = oxaloacetate + L-glutamate. Its function is as follows. Plays a key role in amino acid metabolism. Important for metabolite exchange between mitochondria and cytosol. This Schizosaccharomyces pombe (strain 972 / ATCC 24843) (Fission yeast) protein is Aspartate aminotransferase, mitochondrial.